Here is a 540-residue protein sequence, read N- to C-terminus: Phosphoenolpyruvate carboxykinase (ATP) (540 aa).

Residue Arg-65 coordinates substrate. An N6-acetyllysine modification is found at Lys-87. Positions 207 and 213 each coordinate substrate. ATP contacts are provided by residues Lys-213, His-232, and 248-256 (GLSGTGKTT). The Mn(2+) site is built by Lys-213 and His-232. Asp-269 lines the Mn(2+) pocket. Residues Glu-297, Arg-333, 449-450 (RI), and Thr-455 contribute to the ATP site. A substrate-binding site is contributed by Arg-333. Lys-523 carries the post-translational modification N6-acetyllysine.

The protein belongs to the phosphoenolpyruvate carboxykinase (ATP) family. In terms of assembly, monomer. Requires Mn(2+) as cofactor.

The protein localises to the cytoplasm. It catalyses the reaction oxaloacetate + ATP = phosphoenolpyruvate + ADP + CO2. It participates in carbohydrate biosynthesis; gluconeogenesis. Involved in the gluconeogenesis. Catalyzes the conversion of oxaloacetate (OAA) to phosphoenolpyruvate (PEP) through direct phosphoryl transfer between the nucleoside triphosphate and OAA. The protein is Phosphoenolpyruvate carboxykinase (ATP) of Escherichia coli O7:K1 (strain IAI39 / ExPEC).